The primary structure comprises 332 residues: Ketol-acid reductoisomerase (NADP(+)) (332 aa).

The 182-residue stretch at Met1–Thr182 folds into the KARI N-terminal Rossmann domain. Residues Tyr25–Gln28 and Asp83–Gln86 each bind NADP(+). His108 is an active-site residue. Gly134 provides a ligand contact to NADP(+). The KARI C-terminal knotted domain occupies Thr183 to Leu328. Residues Asp191, Glu195, Glu227, and Glu231 each coordinate Mg(2+). Ser252 lines the substrate pocket.

Belongs to the ketol-acid reductoisomerase family. Mg(2+) serves as cofactor.

It carries out the reaction (2R)-2,3-dihydroxy-3-methylbutanoate + NADP(+) = (2S)-2-acetolactate + NADPH + H(+). It catalyses the reaction (2R,3R)-2,3-dihydroxy-3-methylpentanoate + NADP(+) = (S)-2-ethyl-2-hydroxy-3-oxobutanoate + NADPH + H(+). It participates in amino-acid biosynthesis; L-isoleucine biosynthesis; L-isoleucine from 2-oxobutanoate: step 2/4. Its pathway is amino-acid biosynthesis; L-valine biosynthesis; L-valine from pyruvate: step 2/4. Functionally, involved in the biosynthesis of branched-chain amino acids (BCAA). Catalyzes an alkyl-migration followed by a ketol-acid reduction of (S)-2-acetolactate (S2AL) to yield (R)-2,3-dihydroxy-isovalerate. In the isomerase reaction, S2AL is rearranged via a Mg-dependent methyl migration to produce 3-hydroxy-3-methyl-2-ketobutyrate (HMKB). In the reductase reaction, this 2-ketoacid undergoes a metal-dependent reduction by NADPH to yield (R)-2,3-dihydroxy-isovalerate. In Dehalococcoides mccartyi (strain CBDB1), this protein is Ketol-acid reductoisomerase (NADP(+)).